The sequence spans 113 residues: UPF0102 protein Ccon26_01140 (113 aa).

The protein belongs to the UPF0102 family.

In Campylobacter concisus (strain 13826), this protein is UPF0102 protein Ccon26_01140.